The sequence spans 250 residues: MRHVYVGNFDYDTRHSDLERLFSKFGRVKRVDMKSGYAFVYFEDERDAEDAIRRTDNTTFGYGRRKLSVEWAKDFQGERGKPRDGKAVSNQRPTKTLFVINFDPIRTRERDMERHFEPYGKVLNVRMRRNFAFVQFATQEDATKALDSTHNSKLLDKVVSVEYALREAGEREDRYAGSRRRRSPSPVYRRRPSPDYTRRRSPEYDRYKGPAPYERRKSPDYGRRSSDYGRARARSPGYDRSRSPIQRARG.

RRM domains lie at 2–74 (RHVY…WAKD) and 95–166 (KTLF…YALR). Residues 170 to 250 (EREDRYAGSR…SRSPIQRARG (81 aa)) form a disordered region. Residues 177-191 (GSRRRRSPSPVYRRR) are compositionally biased toward basic residues. 5 positions are modified to phosphoserine: S183, S185, S201, S218, and S243. Basic and acidic residues predominate over residues 192-230 (PSPDYTRRRSPEYDRYKGPAPYERRKSPDYGRRSSDYGR).

Belongs to the splicing factor SR family. RS subfamily. Component of the spliceosome. Interacts with MOS14.

Its subcellular location is the nucleus speckle. It is found in the nucleus. The protein localises to the nucleoplasm. Its function is as follows. Probably involved in intron recognition and spliceosome assembly. The polypeptide is Serine/arginine-rich splicing factor RS31A (RS31A) (Arabidopsis thaliana (Mouse-ear cress)).